We begin with the raw amino-acid sequence, 92 residues long: Small ribosomal subunit protein uS19c (92 aa).

This sequence belongs to the universal ribosomal protein uS19 family.

Its subcellular location is the plastid. Protein S19 forms a complex with S13 that binds strongly to the 16S ribosomal RNA. In Cuscuta exaltata (Tall dodder), this protein is Small ribosomal subunit protein uS19c.